The following is a 515-amino-acid chain: ATP synthase subunit alpha (515 aa).

An ATP-binding site is contributed by glycine 169 to threonine 176.

Belongs to the ATPase alpha/beta chains family. F-type ATPases have 2 components, CF(1) - the catalytic core - and CF(0) - the membrane proton channel. CF(1) has five subunits: alpha(3), beta(3), gamma(1), delta(1), epsilon(1). CF(0) has three main subunits: a(1), b(2) and c(9-12). The alpha and beta chains form an alternating ring which encloses part of the gamma chain. CF(1) is attached to CF(0) by a central stalk formed by the gamma and epsilon chains, while a peripheral stalk is formed by the delta and b chains.

The protein localises to the cell inner membrane. It carries out the reaction ATP + H2O + 4 H(+)(in) = ADP + phosphate + 5 H(+)(out). Produces ATP from ADP in the presence of a proton gradient across the membrane. The alpha chain is a regulatory subunit. This is ATP synthase subunit alpha from Neisseria meningitidis serogroup C (strain 053442).